The primary structure comprises 243 residues: Biosynthetic peptidoglycan transglycosylase (243 aa).

The helical transmembrane segment at 21–43 (LLIVSLVSALMSVLQVIVFRFVD) threads the bilayer.

It belongs to the glycosyltransferase 51 family.

Its subcellular location is the cell inner membrane. It carries out the reaction [GlcNAc-(1-&gt;4)-Mur2Ac(oyl-L-Ala-gamma-D-Glu-L-Lys-D-Ala-D-Ala)](n)-di-trans,octa-cis-undecaprenyl diphosphate + beta-D-GlcNAc-(1-&gt;4)-Mur2Ac(oyl-L-Ala-gamma-D-Glu-L-Lys-D-Ala-D-Ala)-di-trans,octa-cis-undecaprenyl diphosphate = [GlcNAc-(1-&gt;4)-Mur2Ac(oyl-L-Ala-gamma-D-Glu-L-Lys-D-Ala-D-Ala)](n+1)-di-trans,octa-cis-undecaprenyl diphosphate + di-trans,octa-cis-undecaprenyl diphosphate + H(+). It functions in the pathway cell wall biogenesis; peptidoglycan biosynthesis. Its function is as follows. Peptidoglycan polymerase that catalyzes glycan chain elongation from lipid-linked precursors. This chain is Biosynthetic peptidoglycan transglycosylase, found in Xylella fastidiosa (strain M12).